A 355-amino-acid chain; its full sequence is D-alanine--D-alanine ligase (355 aa).

Residues 143 to 350 enclose the ATP-grasp domain; it reads KIIFSNLKIP…IEQLVAKLVD (208 aa). 178 to 233 is a binding site for ATP; that stretch reads LKKLNFPVFVKPSNSGSSLGISKVINKSEIIPALEKARGIDPSILIEEGLEVREIE. Asp303, Glu317, and Asn319 together coordinate Mg(2+).

This sequence belongs to the D-alanine--D-alanine ligase family. It depends on Mg(2+) as a cofactor. Mn(2+) is required as a cofactor.

The protein localises to the cytoplasm. It catalyses the reaction 2 D-alanine + ATP = D-alanyl-D-alanine + ADP + phosphate + H(+). It functions in the pathway cell wall biogenesis; peptidoglycan biosynthesis. In terms of biological role, cell wall formation. The protein is D-alanine--D-alanine ligase of Prochlorococcus marinus (strain AS9601).